The chain runs to 237 residues: DNA repair protein RecO (237 aa).

This sequence belongs to the RecO family.

Its function is as follows. Involved in DNA repair and RecF pathway recombination. The chain is DNA repair protein RecO from Flavobacterium johnsoniae (strain ATCC 17061 / DSM 2064 / JCM 8514 / BCRC 14874 / CCUG 350202 / NBRC 14942 / NCIMB 11054 / UW101) (Cytophaga johnsonae).